Here is a 334-residue protein sequence, read N- to C-terminus: Glyceraldehyde-3-phosphate dehydrogenase (334 aa).

Residues 11-12 (RI), aspartate 33, and serine 119 contribute to the NAD(+) site. D-glyceraldehyde 3-phosphate contacts are provided by residues 149–151 (SCT) and threonine 180. Cysteine 150 serves as the catalytic Nucleophile. Asparagine 181 serves as a coordination point for NAD(+). D-glyceraldehyde 3-phosphate-binding positions include arginine 197, 210–211 (TG), and arginine 233. Asparagine 314 lines the NAD(+) pocket.

The protein belongs to the glyceraldehyde-3-phosphate dehydrogenase family. In terms of assembly, homotetramer.

The protein localises to the cytoplasm. The catalysed reaction is D-glyceraldehyde 3-phosphate + phosphate + NAD(+) = (2R)-3-phospho-glyceroyl phosphate + NADH + H(+). The protein operates within carbohydrate degradation; glycolysis; pyruvate from D-glyceraldehyde 3-phosphate: step 1/5. Catalyzes the oxidative phosphorylation of glyceraldehyde 3-phosphate (G3P) to 1,3-bisphosphoglycerate (BPG) using the cofactor NAD. The first reaction step involves the formation of a hemiacetal intermediate between G3P and a cysteine residue, and this hemiacetal intermediate is then oxidized to a thioester, with concomitant reduction of NAD to NADH. The reduced NADH is then exchanged with the second NAD, and the thioester is attacked by a nucleophilic inorganic phosphate to produce BPG. The sequence is that of Glyceraldehyde-3-phosphate dehydrogenase (gap) from Clostridium pasteurianum.